Consider the following 70-residue polypeptide: Large ribosomal subunit protein eL24 (70 aa).

Positions 7, 10, 33, and 37 each coordinate Zn(2+). Residues 7–37 form a C4-type zinc finger; that stretch reads CSFCGYEIEPGKGKMVVEKDGTVLYFCSSKC.

This sequence belongs to the eukaryotic ribosomal protein eL24 family. In terms of assembly, part of the 50S ribosomal subunit. Forms a cluster with proteins L3 and L14. It depends on Zn(2+) as a cofactor.

Its function is as follows. Binds to the 23S rRNA. This Methanocaldococcus jannaschii (strain ATCC 43067 / DSM 2661 / JAL-1 / JCM 10045 / NBRC 100440) (Methanococcus jannaschii) protein is Large ribosomal subunit protein eL24.